The sequence spans 94 residues: Phosphoribosyl-ATP pyrophosphatase (94 aa).

This sequence belongs to the PRA-PH family.

The protein localises to the cytoplasm. The catalysed reaction is 1-(5-phospho-beta-D-ribosyl)-ATP + H2O = 1-(5-phospho-beta-D-ribosyl)-5'-AMP + diphosphate + H(+). It participates in amino-acid biosynthesis; L-histidine biosynthesis; L-histidine from 5-phospho-alpha-D-ribose 1-diphosphate: step 2/9. The protein is Phosphoribosyl-ATP pyrophosphatase of Pyrobaculum calidifontis (strain DSM 21063 / JCM 11548 / VA1).